We begin with the raw amino-acid sequence, 120 residues long: Large ribosomal subunit protein uL18 (120 aa).

The protein belongs to the universal ribosomal protein uL18 family. In terms of assembly, part of the 50S ribosomal subunit; part of the 5S rRNA/L5/L18/L25 subcomplex. Contacts the 5S and 23S rRNAs.

In terms of biological role, this is one of the proteins that bind and probably mediate the attachment of the 5S RNA into the large ribosomal subunit, where it forms part of the central protuberance. The polypeptide is Large ribosomal subunit protein uL18 (Brucella suis biovar 1 (strain 1330)).